The following is a 431-amino-acid chain: POU domain, class 2, transcription factor 3 (431 aa).

Disordered regions lie at residues 1–39 (MVNL…RNGL), 130–180 (LLPQ…EPTD), and 248–267 (DAES…YPTL). The POU-specific domain maps to 176–250 (DEPTDLEELE…LLEKWLNDAE (75 aa)). A compositionally biased stretch (low complexity) spans 251–267 (SSPSDPSASTPSSYPTL). The homeobox DNA-binding region spans 274–333 (KRKKRTSIETNIRLTLEKRFQDNPKPSSEEISMIAEQLSMEKEVVRVWFCNRRQKEKRIN). Low complexity-rich tracts occupy residues 352-364 (PSGS…VPPV), 374-390 (SSCS…PGSG), and 398-419 (ASQN…NSSG). Residues 352–419 (PSGSLGPLSV…SSSSSFNSSG (68 aa)) form a disordered region.

Belongs to the POU transcription factor family. Class-2 subfamily. As to quaternary structure, interacts (via the POU domain) with POU2AF1 and POU2AF2 in a DNA-dependent manner; this interaction recruits POU2AF2 to chromatin and increases POU2F3 transactivation activity. Skin, thymus, stomach and testis.

The protein localises to the nucleus. Functionally, transcription factor that binds to the octamer motif (5'-ATTTGCAT-3'). Regulates cell type-specific differentiation pathways. Involved in the regulation of keratinocytes differentiation. The POU2F3-POU2AF2/POU2AF3 complex drives the expression of tuft-cell-specific genes, a rare chemosensory cells that coordinate immune and neural functions within mucosal epithelial tissues. This Mus musculus (Mouse) protein is POU domain, class 2, transcription factor 3 (Pou2f3).